We begin with the raw amino-acid sequence, 950 residues long: Protocadherin alpha-13 (950 aa).

An N-terminal signal peptide occupies residues 1-29 (MLSSWQGGPRPRQLLLWLLILAAWETGSG). Residues 30–697 (QLHYSVPEEA…GPEAALVDVN (668 aa)) lie on the Extracellular side of the membrane. Cadherin domains are found at residues 34-133 (SVPE…PPIF), 134-242 (PESK…APEF), 243-350 (YQSV…APEV), 351-455 (TITS…APAF), 456-565 (AQPE…APAL), and 581-678 (MPRS…APQA). 2 N-linked (GlcNAc...) asparagine glycosylation sites follow: N257 and N265. N-linked (GlcNAc...) asparagine glycosylation is present at N548. The chain crosses the membrane as a helical span at residues 698-718 (VYLIIAICAVSSLLVLTLLLY). The Cytoplasmic portion of the chain corresponds to 719-950 (TALRCSAPPT…GNSTTDNSDQ (232 aa)). PXXP repeat units lie at residues 734-737 (PGKP), 774-777 (PSLP), 799-802 (PRQP), 832-835 (PGGP), 873-876 (PGNP), and 891-894 (PGSP). The tract at residues 734-894 (PGKPTLVCSS…PDKFIIPGSP (161 aa)) is 6 X 4 AA repeats of P-X-X-P. Disordered regions lie at residues 774-808 (PSLP…DWRY) and 827-950 (ILRA…NSDQ). Positions 787-800 (GQREEDSEGLKEPR) are enriched in basic and acidic residues. The span at 909–923 (DKSDFITFGKKEETK) shows a compositional bias: basic and acidic residues.

Its subcellular location is the cell membrane. In terms of biological role, potential calcium-dependent cell-adhesion protein. May be involved in the establishment and maintenance of specific neuronal connections in the brain. In Pan troglodytes (Chimpanzee), this protein is Protocadherin alpha-13 (PCDHA13).